Consider the following 115-residue polypeptide: MDILRTLASEQLKKDVPEFSNGDTVKVHVKIKEGSRERIQIFEGIVIKRQGGGIAETFTVRRIASGVGVERTFPVHSPRVEKVEVTRRGQVRRAKLYYLRDRVGKAAFKIKEKRR.

It belongs to the bacterial ribosomal protein bL19 family.

Its function is as follows. This protein is located at the 30S-50S ribosomal subunit interface and may play a role in the structure and function of the aminoacyl-tRNA binding site. The sequence is that of Large ribosomal subunit protein bL19 from Alkaliphilus oremlandii (strain OhILAs) (Clostridium oremlandii (strain OhILAs)).